Reading from the N-terminus, the 269-residue chain is Zinc transporter ZupT (269 aa).

The next 8 helical transmembrane spans lie at 12 to 32 (AFSITLAAGLFTVLGSGLVMF), 41 to 61 (LSFGLAFAGGAMVYVSLTEIF), 75 to 95 (DHAFAAATMAFLAGMGGIALI), 126 to 146 (MMAAFAITAHNFPEGLATFFA), 152 to 172 (AVGMPLALAIAIHNIPEGISI), 187 to 207 (VWACLLSGLAEPLGAALGYLV), 211 to 231 (FLSPAVFGSVFGVIAGVMVFL), and 249 to 269 (TVYGLTMGMAVIAVSLVLFHF). Positions 136 and 139 each coordinate Fe(2+). 2 residues coordinate Zn(2+): Glu-139 and His-164. 3 residues coordinate Fe(2+): Asn-165, Glu-168, and Glu-197. Glu-168 contacts Zn(2+).

This sequence belongs to the ZIP transporter (TC 2.A.5) family. ZupT subfamily.

It is found in the cell inner membrane. It catalyses the reaction Zn(2+)(in) = Zn(2+)(out). Its function is as follows. Mediates zinc uptake. May also transport other divalent cations. This chain is Zinc transporter ZupT, found in Neisseria meningitidis serogroup A / serotype 4A (strain DSM 15465 / Z2491).